A 427-amino-acid polypeptide reads, in one-letter code: MLDAKLIKANAALVEQQLEKRGLSGVLKPFLALDEERRKILVQVEERKNFRNNSSQQIGKMKKEGLNPADLMEEVRQAGQQIKELDEELARVEKEIEKILLNIPNLPHESVPVGEDEKSNQEVRRWGEPRQFNFEPQAHWDIGPALDILDFERAAKLSGARFTVYKGAGARLERAVINFYLDIHCGEHGYREILPPFMVIADCMVGTGQLPKFAEDMFKLEGKDMYLIPTAEVPLTNLYREEILEAKDLPFYLTAYTPCFRAEAGSHGRDTRGVIRQHQFNKVELVKLCEPQNSYEELEKLTKDAERVLQLLGLPYRVVVLSTGDMGFSAAKTYDIEVWMPGYQDYREISSCSNCEDFQARRANIRYRPDPKAKLQYVHTLNGSGVAIGRTVAAILENYQQEDGSVIIPEVLRPYMGGLEKINRPEA.

T230 to E232 lines the L-serine pocket. Residue R261 to E263 coordinates ATP. E284 is a binding site for L-serine. E348–S351 is an ATP binding site. S384 is a binding site for L-serine.

The protein belongs to the class-II aminoacyl-tRNA synthetase family. Type-1 seryl-tRNA synthetase subfamily. In terms of assembly, homodimer. The tRNA molecule binds across the dimer.

It is found in the cytoplasm. It carries out the reaction tRNA(Ser) + L-serine + ATP = L-seryl-tRNA(Ser) + AMP + diphosphate + H(+). It catalyses the reaction tRNA(Sec) + L-serine + ATP = L-seryl-tRNA(Sec) + AMP + diphosphate + H(+). It functions in the pathway aminoacyl-tRNA biosynthesis; selenocysteinyl-tRNA(Sec) biosynthesis; L-seryl-tRNA(Sec) from L-serine and tRNA(Sec): step 1/1. Functionally, catalyzes the attachment of serine to tRNA(Ser). Is also able to aminoacylate tRNA(Sec) with serine, to form the misacylated tRNA L-seryl-tRNA(Sec), which will be further converted into selenocysteinyl-tRNA(Sec). In Syntrophomonas wolfei subsp. wolfei (strain DSM 2245B / Goettingen), this protein is Serine--tRNA ligase.